The primary structure comprises 355 residues: Trans-3-hydroxy-L-proline dehydratase (355 aa).

Cysteine 111 functions as the Proton acceptor in the catalytic mechanism. Residues 112–113 (GH) and 276–277 (GS) contribute to the substrate site.

The protein belongs to the proline racemase family. In terms of assembly, homodimer.

The enzyme catalyses trans-3-hydroxy-L-proline = 1-pyrroline-2-carboxylate + H2O. Functionally, catalyzes the dehydration of trans-3-hydroxy-L-proline (t3LHyp) to Delta(1)-pyrroline-2-carboxylate (Pyr2C). Together with LhpI, is involved in a metabolic pathway that converts t3LHyp to L-proline. The chain is Trans-3-hydroxy-L-proline dehydratase from Colwellia psychrerythraea (strain 34H / ATCC BAA-681) (Vibrio psychroerythus).